Here is a 612-residue protein sequence, read N- to C-terminus: Zinc metalloproteinase-disintegrin-like 2d (612 aa).

Positions Met-1–Ser-20 are cleaved as a signal peptide. A propeptide spanning residues Ile-21–Pro-189 is cleaved from the precursor. In terms of domain architecture, Peptidase M12B spans Lys-199 to Pro-395. Glu-202 lines the Ca(2+) pocket. N-linked (GlcNAc...) asparagine glycosylation occurs at Asn-218. Asp-286 contacts Ca(2+). Cystine bridges form between Cys-310–Cys-390, Cys-350–Cys-374, and Cys-352–Cys-357. His-335 is a binding site for Zn(2+). The active site involves Glu-336. Zn(2+) is bound by residues His-339 and His-345. Ca(2+)-binding residues include Cys-390, Asn-393, Val-405, Asn-408, Phe-410, Glu-412, Glu-415, and Asp-418. A Disintegrin domain is found at Pro-403–Asn-489. Intrachain disulfides connect Cys-406-Cys-435, Cys-417-Cys-430, Cys-419-Cys-425, Cys-429-Cys-452, Cys-443-Cys-449, Cys-448-Cys-474, Cys-461-Cys-481, Cys-468-Cys-500, Cys-493-Cys-505, Cys-512-Cys-562, Cys-527-Cys-573, Cys-540-Cys-550, Cys-557-Cys-599, and Cys-593-Cys-605. The short motif at Glu-467–Asp-469 is the D/ECD-tripeptide element.

The protein belongs to the venom metalloproteinase (M12B) family. P-III subfamily. Zn(2+) serves as cofactor. Expressed by the venom gland.

The protein resides in the secreted. Its function is as follows. Snake venom metalloproteinase that impairs hemostasis in the envenomed animal. This Crotalus adamanteus (Eastern diamondback rattlesnake) protein is Zinc metalloproteinase-disintegrin-like 2d.